Consider the following 182-residue polypeptide: Ribosome maturation factor RimM (182 aa).

The PRC barrel domain occupies 102–182; sequence EEDDYYWKDL…RVEVDWDPGF (81 aa).

Belongs to the RimM family. In terms of assembly, binds ribosomal protein uS19.

The protein resides in the cytoplasm. Its function is as follows. An accessory protein needed during the final step in the assembly of 30S ribosomal subunit, possibly for assembly of the head region. Essential for efficient processing of 16S rRNA. May be needed both before and after RbfA during the maturation of 16S rRNA. It has affinity for free ribosomal 30S subunits but not for 70S ribosomes. This chain is Ribosome maturation factor RimM, found in Yersinia pseudotuberculosis serotype IB (strain PB1/+).